We begin with the raw amino-acid sequence, 464 residues long: Glucan 1,3-beta-glucosidase 3 (464 aa).

This sequence belongs to the glycosyl hydrolase 5 (cellulase A) family.

It catalyses the reaction Successive hydrolysis of beta-D-glucose units from the non-reducing ends of (1-&gt;3)-beta-D-glucans, releasing alpha-glucose.. The protein is Glucan 1,3-beta-glucosidase 3 (exg3) of Schizosaccharomyces pombe (strain 972 / ATCC 24843) (Fission yeast).